We begin with the raw amino-acid sequence, 435 residues long: tRNA(Ile)-lysidine synthase (435 aa).

Residue 25–30 (SGGLDS) coordinates ATP.

Belongs to the tRNA(Ile)-lysidine synthase family.

The protein resides in the cytoplasm. The catalysed reaction is cytidine(34) in tRNA(Ile2) + L-lysine + ATP = lysidine(34) in tRNA(Ile2) + AMP + diphosphate + H(+). In terms of biological role, ligates lysine onto the cytidine present at position 34 of the AUA codon-specific tRNA(Ile) that contains the anticodon CAU, in an ATP-dependent manner. Cytidine is converted to lysidine, thus changing the amino acid specificity of the tRNA from methionine to isoleucine. This chain is tRNA(Ile)-lysidine synthase, found in Photobacterium profundum (strain SS9).